The chain runs to 410 residues: Auxin-induced protein 5NG4 (410 aa).

At 1 to 16 the chain is on the cytoplasmic side; sequence MASNIMQRCNVFMSER. Residues 17 to 37 traverse the membrane as a helical segment; sequence VKLHAAMLALQFGYAGFHIVS. Residues 38–47 are Extracellular-facing; that stretch reads RAALNMGVSK. A helical transmembrane segment spans residues 48 to 68; that stretch reads VVFPVYRNILALMLIGPCAYF. Residues 69–74 lie on the Cytoplasmic side of the membrane; the sequence is LEKKER. Residues 75–95 form a helical membrane-spanning segment; it reads PALTLSFLIQFFLLALCGITG. The Extracellular portion of the chain corresponds to 96 to 109; sequence QSRILSLRIVLHIP. A helical transmembrane segment spans residues 110-130; that stretch reads TFASAIQNSVPAITFIMAAAL. Residues 131 to 141 lie on the Cytoplasmic side of the membrane; it reads RLEKVHISRRD. The helical transmembrane segment at 142–162 threads the bilayer; the sequence is GLAKIIGTVACVSGATIITLY. Over 163–196 the chain is Extracellular; the sequence is KGPPITHIWRPNLEVTASYFKAFQGNDLSAKSEN. Asn196 carries an N-linked (GlcNAc...) asparagine glycan. A helical transmembrane segment spans residues 197 to 217; it reads WTLGCIYLLGNCLAWSGWIVL. One can recognise an EamA domain in the interval 209–338; the sequence is LAWSGWIVLQ…IIIGLYLVLW (130 aa). Residues 218–229 lie on the Cytoplasmic side of the membrane; that stretch reads QAPVLKRYPARL. A helical transmembrane segment spans residues 230–250; that stretch reads SVTSFTCFFGVIQFLIIAAFF. The Extracellular segment spans residues 251-264; the sequence is ETDLEHWKIHSGGE. Residues 265 to 285 traverse the membrane as a helical segment; sequence LFTILYAGFVASGIAFSVQIW. Topologically, residues 286 to 292 are cytoplasmic; it reads CIDRGGP. The helical transmembrane segment at 293–313 threads the bilayer; the sequence is VFVAVYQPVQTIAVAIMASII. The Extracellular portion of the chain corresponds to 314–317; sequence LGEQ. A helical transmembrane segment spans residues 318–338; sequence FYLGGIFGAILIIIGLYLVLW. Over 339–410 the chain is Cytoplasmic; that stretch reads GKSEEKRLGL…IPSPSDEPQP (72 aa).

It belongs to the drug/metabolite transporter (DMT) superfamily. Plant drug/metabolite exporter (P-DME) (TC 2.A.7.4) family.

The protein localises to the membrane. The polypeptide is Auxin-induced protein 5NG4 (Pinus taeda (Loblolly pine)).